The following is a 77-amino-acid chain: Putative sulfur carrier protein AF_0188 (77 aa).

The active-site Cysteine persulfide intermediate is cysteine 11.

This sequence belongs to the sulfur carrier protein TusA family.

In Archaeoglobus fulgidus (strain ATCC 49558 / DSM 4304 / JCM 9628 / NBRC 100126 / VC-16), this protein is Putative sulfur carrier protein AF_0188.